The following is a 73-amino-acid chain: SIFamide-related peptide (73 aa).

The first 23 residues, 1-23 (MVSIRLTFALAIVAIIFAFSVDA), serve as a signal peptide directing secretion. F35 carries the phenylalanine amide modification. Positions 39–73 (SNTMTDYEFTSRALSAICEVASETCTAWMSRQESN) are excised as a propeptide.

As to expression, expressed in brain, the retrocerebral complex and in ventral, thoracic and abdominal ganglia (at protein level).

It localises to the secreted. The polypeptide is SIFamide-related peptide (Camponotus floridanus (Florida carpenter ant)).